The following is a 582-amino-acid chain: ATP-dependent lipid A-core flippase (582 aa).

Transmembrane regions (helical) follow at residues 16–36 (LWPM…ALIL), 63–83 (ILVW…VSGF), 153–173 (IIGL…ILVV), 253–273 (PLIQ…ASFP), and 275–295 (VMET…IALM). Residues 28 to 310 (IVAAIALILN…LTNVNAQFQR (283 aa)) form the ABC transmembrane type-1 domain. The region spanning 342–578 (IAFDHVTFSY…QGVYAQLHQL (237 aa)) is the ABC transporter domain. 376–383 (GRSGSGKS) contributes to the ATP binding site.

The protein belongs to the ABC transporter superfamily. Lipid exporter (TC 3.A.1.106) family. As to quaternary structure, homodimer.

Its subcellular location is the cell inner membrane. It catalyses the reaction ATP + H2O + lipid A-core oligosaccharideSide 1 = ADP + phosphate + lipid A-core oligosaccharideSide 2.. Involved in lipopolysaccharide (LPS) biosynthesis. Translocates lipid A-core from the inner to the outer leaflet of the inner membrane. Transmembrane domains (TMD) form a pore in the inner membrane and the ATP-binding domain (NBD) is responsible for energy generation. The polypeptide is ATP-dependent lipid A-core flippase (Sodalis glossinidius (strain morsitans)).